Reading from the N-terminus, the 319-residue chain is ATP-dependent 6-phosphofructokinase (319 aa).

Glycine 11 is an ATP binding site. 21-25 (RAVVR) serves as a coordination point for ADP. ATP contacts are provided by residues 72 to 73 (RC) and 102 to 105 (GDGS). Aspartate 103 is a Mg(2+) binding site. Residue 125-127 (TID) participates in substrate binding. The active-site Proton acceptor is aspartate 127. Residue arginine 154 participates in ADP binding. Substrate-binding positions include arginine 162 and 169-171 (MGR). ADP is bound by residues 185–187 (GAE), arginine 211, and 213–215 (KKH). Substrate is bound by residues glutamate 222, arginine 243, and 249–252 (HIQR).

This sequence belongs to the phosphofructokinase type A (PFKA) family. ATP-dependent PFK group I subfamily. Prokaryotic clade 'B1' sub-subfamily. As to quaternary structure, homotetramer. The cofactor is Mg(2+).

The protein localises to the cytoplasm. It carries out the reaction beta-D-fructose 6-phosphate + ATP = beta-D-fructose 1,6-bisphosphate + ADP + H(+). It participates in carbohydrate degradation; glycolysis; D-glyceraldehyde 3-phosphate and glycerone phosphate from D-glucose: step 3/4. With respect to regulation, allosterically activated by ADP and other diphosphonucleosides, and allosterically inhibited by phosphoenolpyruvate. Functionally, catalyzes the phosphorylation of D-fructose 6-phosphate to fructose 1,6-bisphosphate by ATP, the first committing step of glycolysis. The protein is ATP-dependent 6-phosphofructokinase of Bacillus velezensis (strain DSM 23117 / BGSC 10A6 / LMG 26770 / FZB42) (Bacillus amyloliquefaciens subsp. plantarum).